A 344-amino-acid chain; its full sequence is Succinylglutamate desuccinylase (344 aa).

Positions 63, 66, and 160 each coordinate Zn(2+). Residue glutamate 224 is part of the active site.

It belongs to the AspA/AstE family. Succinylglutamate desuccinylase subfamily. It depends on Zn(2+) as a cofactor.

The catalysed reaction is N-succinyl-L-glutamate + H2O = L-glutamate + succinate. The protein operates within amino-acid degradation; L-arginine degradation via AST pathway; L-glutamate and succinate from L-arginine: step 5/5. Transforms N(2)-succinylglutamate into succinate and glutamate. In Shewanella sp. (strain W3-18-1), this protein is Succinylglutamate desuccinylase.